The chain runs to 97 residues: Aspartyl/glutamyl-tRNA(Asn/Gln) amidotransferase subunit C (97 aa).

It belongs to the GatC family. As to quaternary structure, heterotrimer of A, B and C subunits.

It carries out the reaction L-glutamyl-tRNA(Gln) + L-glutamine + ATP + H2O = L-glutaminyl-tRNA(Gln) + L-glutamate + ADP + phosphate + H(+). It catalyses the reaction L-aspartyl-tRNA(Asn) + L-glutamine + ATP + H2O = L-asparaginyl-tRNA(Asn) + L-glutamate + ADP + phosphate + 2 H(+). Its function is as follows. Allows the formation of correctly charged Asn-tRNA(Asn) or Gln-tRNA(Gln) through the transamidation of misacylated Asp-tRNA(Asn) or Glu-tRNA(Gln) in organisms which lack either or both of asparaginyl-tRNA or glutaminyl-tRNA synthetases. The reaction takes place in the presence of glutamine and ATP through an activated phospho-Asp-tRNA(Asn) or phospho-Glu-tRNA(Gln). The polypeptide is Aspartyl/glutamyl-tRNA(Asn/Gln) amidotransferase subunit C (Synechococcus sp. (strain CC9605)).